Reading from the N-terminus, the 173-residue chain is ADP-ribosylation factor-like protein 11 (173 aa).

The N-myristoyl glycine moiety is linked to residue glycine 2. GTP contacts are provided by residues 17–24, 61–65, and 120–123; these read GLDCAGKT, DIGGQ, and NKQE.

It belongs to the small GTPase superfamily. Arf family.

May play a role in apoptosis. May act as a tumor suppressor. The sequence is that of ADP-ribosylation factor-like protein 11 (Arl11) from Rattus norvegicus (Rat).